The primary structure comprises 892 residues: Putative VWFA domain-containing protein ORF892 (892 aa).

Residues 109-548 (EEQLQRRPQR…RGYAHGDEDL (440 aa)) are disordered. Residues 129–142 (SEVANQRVSRSAEN) show a composition bias toward polar residues. The span at 143–162 (QGKRGNEEKQQQKTPGKTEE) shows a compositional bias: basic and acidic residues. The span at 169 to 184 (ESGEEGNQQEESGEEQ) shows a compositional bias: acidic residues. Over residues 185–196 (EGVKGSRSKQRE) the composition is skewed to basic and acidic residues. The span at 212-223 (ESGESESEEGQS) shows a compositional bias: acidic residues. Composition is skewed to low complexity over residues 224 to 238 (SEET…GNQQ) and 271 to 283 (GNGQ…AQNG). Residues 287–300 (GESEGEITESESAS) are compositionally biased toward acidic residues. The segment covering 301 to 323 (EEQTGSKGKSGQQGEEGQQQSGS) has biased composition (low complexity). Acidic residues-rich tracts occupy residues 324–336 (EGEE…ESGE) and 425–448 (SESE…ETEE). A compositionally biased stretch (low complexity) spans 453 to 466 (SEAEGTAAEGEVGQ). Composition is skewed to polar residues over residues 467–481 (PSEQ…SGQR) and 512–531 (QTGS…QQGE). Residues 536–546 (EGGRGYAHGDE) are compositionally biased toward basic and acidic residues. Residues 553–620 (QEINSILQTL…VQKLLKDLNV (68 aa)) are a coiled coil. The region spanning 723–892 (DFLFVIDSSG…GNIVLKRLVH (170 aa)) is the VWFA domain.

This Acidianus two-tailed virus (ATV) protein is Putative VWFA domain-containing protein ORF892.